The sequence spans 506 residues: Dolabradiene monooxygenase (506 aa).

A helical membrane pass occupies residues 5 to 25 (VLLAVAMVALIAVLSKLKSLL). Residue cysteine 443 participates in heme binding.

This sequence belongs to the cytochrome P450 family. Heme serves as cofactor.

The protein localises to the membrane. The catalysed reaction is dolabradiene + reduced [NADPH--hemoprotein reductase] + O2 = 15,16-epoxydolabrene + oxidized [NADPH--hemoprotein reductase] + H2O + H(+). It carries out the reaction 15,16-epoxydolabrene + reduced [NADPH--hemoprotein reductase] + O2 = 3beta-hydroxy-15,16-epoxydolabrene + oxidized [NADPH--hemoprotein reductase] + H2O + H(+). Functionally, involved in the production of antifungal dolabralexin phytoalexins in response to biotic and abiotic stresses. Catalyzes the epoxidation of dolabradiene at C-16, followed by hydroxylation at C-3, to yield the epoxides 15,16-epoxydolabrene (epoxydolabrene) and 3b-hydroxy-15,16-epoxydolabrene (epoxydolabranol). This Zea mays (Maize) protein is Dolabradiene monooxygenase.